Here is a 210-residue protein sequence, read N- to C-terminus: Proteasome subunit beta 2 (210 aa).

Residues 1–12 (MSNNVEEKILHG) constitute a propeptide, removed in mature form; by autocatalysis. Threonine 13 functions as the Nucleophile in the catalytic mechanism.

The protein belongs to the peptidase T1B family. In terms of assembly, the 20S proteasome core is composed of 14 alpha and 14 beta subunits that assemble into four stacked heptameric rings, resulting in a barrel-shaped structure. The two inner rings, each composed of seven catalytic beta subunits, are sandwiched by two outer rings, each composed of seven alpha subunits. The catalytic chamber with the active sites is on the inside of the barrel. Has a gated structure, the ends of the cylinder being occluded by the N-termini of the alpha-subunits. Is capped at one or both ends by the proteasome regulatory ATPase, PAN.

It is found in the cytoplasm. It carries out the reaction Cleavage of peptide bonds with very broad specificity.. Its activity is regulated as follows. The formation of the proteasomal ATPase PAN-20S proteasome complex, via the docking of the C-termini of PAN into the intersubunit pockets in the alpha-rings, triggers opening of the gate for substrate entry. Interconversion between the open-gate and close-gate conformations leads to a dynamic regulation of the 20S proteasome proteolysis activity. Component of the proteasome core, a large protease complex with broad specificity involved in protein degradation. In Cenarchaeum symbiosum (strain A), this protein is Proteasome subunit beta 2.